The sequence spans 587 residues: Chaperonin GroEL 1 (587 aa).

ATP-binding positions include 29 to 32 (TIGP), 86 to 90 (DGTTT), G413, and D492.

This sequence belongs to the chaperonin (HSP60) family. As to quaternary structure, forms a cylinder of 14 subunits composed of two heptameric rings stacked back-to-back. Interacts with the co-chaperonin GroES.

It is found in the cytoplasm. It carries out the reaction ATP + H2O + a folded polypeptide = ADP + phosphate + an unfolded polypeptide.. Functionally, together with its co-chaperonin GroES, plays an essential role in assisting protein folding. The GroEL-GroES system forms a nano-cage that allows encapsulation of the non-native substrate proteins and provides a physical environment optimized to promote and accelerate protein folding. The sequence is that of Chaperonin GroEL 1 from Prochlorococcus marinus (strain MIT 9515).